The following is an 81-amino-acid chain: MDILKKSLFFILFLGLVSLSISEEEKRENEDEEDQEDDEQSEEKRGLWSKIKTAGKEAAKAAAKAAGKAALNAVSEAIGEQ.

An N-terminal signal peptide occupies residues 1 to 22; that stretch reads MDILKKSLFFILFLGLVSLSIS. The segment at 22–49 is disordered; the sequence is SEEEKRENEDEEDQEDDEQSEEKRGLWS. Residues 23 to 45 constitute a propeptide that is removed on maturation; the sequence is EEEKRENEDEEDQEDDEQSEEKR. The segment covering 30 to 41 has biased composition (acidic residues); sequence EDEEDQEDDEQS. Residue isoleucine 78 is modified to Isoleucine amide. Positions 80 to 81 are excised as a propeptide; the sequence is EQ.

The protein belongs to the frog skin active peptide (FSAP) family. Dermaseptin subfamily. As to expression, expressed by the skin glands.

Its subcellular location is the secreted. Its function is as follows. Antimicrobial peptide. In Phyllomedusa sauvagei (Sauvage's leaf frog), this protein is Dermaseptin-S6.